Here is a 207-residue protein sequence, read N- to C-terminus: Sodium/potassium-transporting ATPase subunit beta-1-interacting protein 1 (207 aa).

Transmembrane regions (helical) follow at residues 2–22 (GRCS…AAAL), 35–55 (APIL…LGTL), and 62–82 (LILY…IICF). Asn100 is a glycosylation site (N-linked (GlcNAc...) asparagine). A helical membrane pass occupies residues 147–167 (ALSSALQIFLALFGFVYACYV).

This sequence belongs to the NKAIN family. In terms of assembly, interacts with atp1b1 C-terminus.

The protein localises to the cell membrane. This chain is Sodium/potassium-transporting ATPase subunit beta-1-interacting protein 1 (nkain1), found in Xenopus tropicalis (Western clawed frog).